We begin with the raw amino-acid sequence, 118 residues long: Na(+)/H(+) antiporter subunit G1 (118 aa).

The next 3 membrane-spanning stretches (helical) occupy residues 9-29 (VSIIFVVLGALISAFAATGLI), 47-67 (LGAMFLLFGAFLYFIGTEGYV), and 69-89 (MQLIIGIIFVFITGPLSSHLI).

It belongs to the CPA3 antiporters (TC 2.A.63) subunit G family. As to quaternary structure, may form a heterooligomeric complex that consists of seven subunits: mnhA1, mnhB1, mnhC1, mnhD1, mnhE1, mnhF1 and mnhG1.

The protein localises to the cell membrane. In terms of biological role, mnh complex is a Na(+)/H(+) antiporter involved in Na(+) excretion. In Staphylococcus epidermidis (strain ATCC 35984 / DSM 28319 / BCRC 17069 / CCUG 31568 / BM 3577 / RP62A), this protein is Na(+)/H(+) antiporter subunit G1 (mnhG1).